Here is a 172-residue protein sequence, read N- to C-terminus: HTH-type transcriptional regulator IscR (172 aa).

The HTH rrf2-type domain occupies 2 to 131 (RLTSKGRYAV…NNITLGELMR (130 aa)). Positions 28-51 (LADISERQGISLSYLEQLFSRLRK) form a DNA-binding region, H-T-H motif. [2Fe-2S] cluster-binding residues include C92, C98, and C104.

[2Fe-2S] cluster is required as a cofactor.

In terms of biological role, regulates the transcription of several operons and genes involved in the biogenesis of Fe-S clusters and Fe-S-containing proteins. The protein is HTH-type transcriptional regulator IscR of Photobacterium profundum (strain SS9).